A 432-amino-acid chain; its full sequence is Adenylosuccinate synthetase (432 aa).

Residues glycine 13 to lysine 19 and glycine 41 to threonine 43 each bind GTP. Aspartate 14 acts as the Proton acceptor in catalysis. Mg(2+) is bound by residues aspartate 14 and glycine 41. Residues aspartate 14–lysine 17, asparagine 39–histidine 42, threonine 130, arginine 144, glutamine 225, threonine 240, and arginine 304 each bind IMP. Residue histidine 42 is the Proton donor of the active site. Substrate is bound at residue alanine 300–arginine 306. Residues arginine 306, lysine 332–aspartate 334, and serine 415–glycine 417 contribute to the GTP site.

It belongs to the adenylosuccinate synthetase family. Homodimer. Requires Mg(2+) as cofactor.

The protein resides in the cytoplasm. It catalyses the reaction IMP + L-aspartate + GTP = N(6)-(1,2-dicarboxyethyl)-AMP + GDP + phosphate + 2 H(+). It functions in the pathway purine metabolism; AMP biosynthesis via de novo pathway; AMP from IMP: step 1/2. Functionally, plays an important role in the de novo pathway of purine nucleotide biosynthesis. Catalyzes the first committed step in the biosynthesis of AMP from IMP. The polypeptide is Adenylosuccinate synthetase (Haemophilus influenzae (strain PittGG)).